Consider the following 156-residue polypeptide: Small ribosomal subunit protein uS7 (156 aa).

It belongs to the universal ribosomal protein uS7 family. In terms of assembly, part of the 30S ribosomal subunit. Contacts proteins S9 and S11.

One of the primary rRNA binding proteins, it binds directly to 16S rRNA where it nucleates assembly of the head domain of the 30S subunit. Is located at the subunit interface close to the decoding center, probably blocks exit of the E-site tRNA. This is Small ribosomal subunit protein uS7 from Synechococcus sp. (strain RCC307).